Reading from the N-terminus, the 290-residue chain is uncharacterized protein (290 aa).

Disordered stretches follow at residues 105–156 (LKHK…KLTV) and 259–290 (EGAQ…KSKK). Residues 114–130 (KATQQARKRNFISSKSK) show a composition bias toward polar residues. Basic and acidic residues-rich tracts occupy residues 143 to 156 (RESK…KLTV) and 261 to 280 (AQRD…EPVL).

This is an uncharacterized protein from Homo sapiens (Human).